A 291-amino-acid polypeptide reads, in one-letter code: Exosome complex exonuclease RRP42 (291 aa).

Ala2 carries the post-translational modification N-acetylalanine. Residue Lys116 is modified to N6-acetyllysine.

The protein belongs to the RNase PH family. As to quaternary structure, component of the RNA exosome core complex (Exo-9), composed of EXOSC1, EXOSC2, EXOSC3, EXOSC4, EXOSC5, EXOSC6, EXOSC7, EXOSC8 and EXOSC9; within the complex interacts with EXOSC2 and EXOSC4. The catalytically inactive RNA exosome core complex (Exo-9) associates with the catalytic subunit EXOSC10/RRP6. Exo-9 may associate with DIS3 to form the nucleolar exosome complex, or DIS3L to form the cytoplasmic exosome complex. Exo-9 is formed by a hexameric base ring consisting of the heterodimers EXOSC4-EXOSC9, EXOSC5-EXOSC8 and EXOSC6-EXOSC7, and a cap ring consisting of EXOSC1, EXOSC2 and EXOSC3. The RNA exosome complex associates with cofactors C1D/RRP47, MPHOSPH6/MPP6 and MTREX/MTR4. Interacts with ZC3HAV1. Interacts with DIS3; the interaction is direct.

It localises to the nucleus. Its subcellular location is the nucleolus. The protein localises to the cytoplasm. Functionally, non-catalytic component of the RNA exosome complex which has 3'-&gt;5' exoribonuclease activity and participates in a multitude of cellular RNA processing and degradation events. In the nucleus, the RNA exosome complex is involved in proper maturation of stable RNA species such as rRNA, snRNA and snoRNA, in the elimination of RNA processing by-products and non-coding 'pervasive' transcripts, such as antisense RNA species and promoter-upstream transcripts (PROMPTs), and of mRNAs with processing defects, thereby limiting or excluding their export to the cytoplasm. The RNA exosome may be involved in Ig class switch recombination (CSR) and/or Ig variable region somatic hypermutation (SHM) by targeting AICDA deamination activity to transcribed dsDNA substrates. In the cytoplasm, the RNA exosome complex is involved in general mRNA turnover and specifically degrades inherently unstable mRNAs containing AU-rich elements (AREs) within their 3' untranslated regions, and in RNA surveillance pathways, preventing translation of aberrant mRNAs. It seems to be involved in degradation of histone mRNA. The catalytic inactive RNA exosome core complex of 9 subunits (Exo-9) is proposed to play a pivotal role in the binding and presentation of RNA for ribonucleolysis, and to serve as a scaffold for the association with catalytic subunits and accessory proteins or complexes. This is Exosome complex exonuclease RRP42 (Exosc7) from Mus musculus (Mouse).